A 398-amino-acid chain; its full sequence is NADH-ubiquinone oxidoreductase 49 kDa subunit (398 aa).

The protein belongs to the complex I 49 kDa subunit family.

It is found in the mitochondrion. It catalyses the reaction a ubiquinone + NADH + 5 H(+)(in) = a ubiquinol + NAD(+) + 4 H(+)(out). Core subunit of the mitochondrial membrane respiratory chain NADH dehydrogenase (Complex I) that is believed to belong to the minimal assembly required for catalysis. Complex I functions in the transfer of electrons from NADH to the respiratory chain. The immediate electron acceptor for the enzyme is believed to be ubiquinone. Component of the iron-sulfur (IP) fragment of the enzyme. Component of the iron-sulfur (IP) fragment of the enzyme. The polypeptide is NADH-ubiquinone oxidoreductase 49 kDa subunit (NAD7) (Cafeteria roenbergensis (Marine flagellate)).